The chain runs to 132 residues: Tyrosine phosphatase-like protein N2 (132 aa).

The 132-residue stretch at 1 to 132 folds into the Tyrosine-protein phosphatase domain; it reads MQGPMKNTVA…DILGRFQRVF (132 aa).

This sequence belongs to the protein-tyrosine phosphatase family.

The polypeptide is Tyrosine phosphatase-like protein N2 (N4) (Microplitis demolitor (Parasitoid wasp)).